Reading from the N-terminus, the 323-residue chain is UDP-glucuronate 4-epimerase (323 aa).

11–13 (GFI) serves as a coordination point for NAD(+). The Proton acceptor role is filled by Tyr-152. Residue Lys-156 coordinates NAD(+).

It belongs to the NAD(P)-dependent epimerase/dehydratase family. NAD(+) is required as a cofactor.

It catalyses the reaction UDP-alpha-D-glucuronate = UDP-alpha-D-galacturonate. In terms of biological role, catalyzes the interconversion of UDP-D-glucuronic acid (UDP-GlcA) and UDP-D-galacturonic acid (UDP-GalA). The polypeptide is UDP-glucuronate 4-epimerase (Thermodesulfobacterium geofontis (strain OPF15)).